The chain runs to 701 residues: Potassium-transporting ATPase ATP-binding subunit 1 (701 aa).

Residues 1 to 26 (MNPVAPTRKVKPPRNRPSDRRQARKK) are disordered. A run of 4 helical transmembrane segments spans residues 57 to 77 (MFVVWVATLVTLAVTINPDLF), 90 to 110 (GLLTGILFFTVWFANFAEAVA), 241 to 261 (VALTVLLAVLSLVFLFVIATL), and 278 to 298 (IALLVALIPTTIGGLLSAIGI). Asp329 serves as the catalytic 4-aspartylphosphate intermediate. Residues Asp366, Glu370, 397–404 (FSAKTRMS), and Lys416 contribute to the ATP site. Mg(2+) contacts are provided by Asp539 and Asp543. 3 consecutive transmembrane segments (helical) span residues 599–619 (FSIANDIAKYFAIIPVIFAAA), 635–655 (AVLSALIYNALIIPALIPLAL), and 681–701 (VIAPFIAIKLIDILITLVGLA).

It belongs to the cation transport ATPase (P-type) (TC 3.A.3) family. Type IA subfamily. In terms of assembly, the system is composed of three essential subunits: KdpA, KdpB and KdpC.

It localises to the cell inner membrane. The enzyme catalyses K(+)(out) + ATP + H2O = K(+)(in) + ADP + phosphate + H(+). Part of the high-affinity ATP-driven potassium transport (or Kdp) system, which catalyzes the hydrolysis of ATP coupled with the electrogenic transport of potassium into the cytoplasm. This subunit is responsible for energy coupling to the transport system and for the release of the potassium ions to the cytoplasm. The sequence is that of Potassium-transporting ATPase ATP-binding subunit 1 from Nostoc sp. (strain PCC 7120 / SAG 25.82 / UTEX 2576).